A 184-amino-acid chain; its full sequence is MTRIVVVDNHGQFTHLEHRALRDLGVDTELIDNDTPPEEIDADGIVLSGGPDMDRIGHSPAYLDLDIPVLGICLGMQLMAAELGGRVGAGDYGGYADVTVSIEDESDPLIGSLAPETRVWASHADEVKELPDGFERTATSEVCNIEAMSDTDRNRYGVQWHPEVAHTEAGEEVFENFRDICAGD.

The Glutamine amidotransferase type-1 domain occupies R3–D184. Residue C73 is the Nucleophile of the active site. Residues H161 and E163 contribute to the active site.

As to quaternary structure, heterodimer composed of a glutamine amidotransferase subunit (A) and a GMP-binding subunit (B).

The enzyme catalyses XMP + L-glutamine + ATP + H2O = GMP + L-glutamate + AMP + diphosphate + 2 H(+). Its pathway is purine metabolism; GMP biosynthesis; GMP from XMP (L-Gln route): step 1/1. Catalyzes the synthesis of GMP from XMP. The sequence is that of GMP synthase [glutamine-hydrolyzing] subunit A from Natronomonas pharaonis (strain ATCC 35678 / DSM 2160 / CIP 103997 / JCM 8858 / NBRC 14720 / NCIMB 2260 / Gabara) (Halobacterium pharaonis).